The following is a 504-amino-acid chain: Deoxyguanosinetriphosphate triphosphohydrolase (504 aa).

Positions 66 to 273 (RLTHSLEVQQ…MEAADDISYC (208 aa)) constitute an HD domain.

Belongs to the dGTPase family. Type 1 subfamily. In terms of assembly, homotetramer. Requires Mg(2+) as cofactor.

It carries out the reaction dGTP + H2O = 2'-deoxyguanosine + triphosphate + H(+). DGTPase preferentially hydrolyzes dGTP over the other canonical NTPs. This chain is Deoxyguanosinetriphosphate triphosphohydrolase, found in Klebsiella pneumoniae (strain 342).